We begin with the raw amino-acid sequence, 234 residues long: Small ribosomal subunit protein uS2 (234 aa).

Belongs to the universal ribosomal protein uS2 family.

In Prochlorococcus marinus (strain MIT 9515), this protein is Small ribosomal subunit protein uS2.